A 185-amino-acid chain; its full sequence is Ribosome-recycling factor (185 aa).

This sequence belongs to the RRF family.

The protein localises to the cytoplasm. Its function is as follows. Responsible for the release of ribosomes from messenger RNA at the termination of protein biosynthesis. May increase the efficiency of translation by recycling ribosomes from one round of translation to another. This Pectobacterium carotovorum subsp. carotovorum (strain PC1) protein is Ribosome-recycling factor.